The chain runs to 1108 residues: Retinal guanylyl cyclase 1 (1108 aa).

Residues 1–54 (MSAWLLPAGGFPGAGFCIPAWQSRSSLSRVLRWPGPGLPGLLLLLLLPSPSAFS) form the signal peptide. Residues 55–465 (AVFKVGVLGP…PDVICNGGVE (411 aa)) lie on the Extracellular side of the membrane. Residues Cys-108 and Cys-136 are joined by a disulfide bond. A glycan (N-linked (GlcNAc...) asparagine) is linked at Asn-300. Residues 466–490 (PGLVFVGFLLVIVVGLTGAFLAHYL) traverse the membrane as a helical segment. At 491–1108 (RHRLLHMQMV…KARPGQFTGK (618 aa)) the chain is on the cytoplasmic side. The tract at residues 520 to 552 (GGSSRKVAQGSRSSLATRSTSDIRSVPSQPQES) is disordered. In terms of domain architecture, Protein kinase spans 520–811 (GGSSRKVAQG…DLTFDLFKGI (292 aa)). Over residues 529-552 (GSRSSLATRSTSDIRSVPSQPQES) the composition is skewed to polar residues. Positions 883 to 1013 (TLYFSDIVGF…DTVNTASRME (131 aa)) constitute a Guanylate cyclase domain. Residues 1069 to 1108 (IPKPPDLQPGASNHGISLQEIPPERRKKLEKARPGQFTGK) are disordered.

This sequence belongs to the adenylyl cyclase class-4/guanylyl cyclase family. In terms of assembly, homodimer; requires homodimerization for guanylyl cyclase activity. Interacts (via C-terminus) with RD3 (via C-terminus); promotes the exit of GUCY2E from the endoplasmic reticulum and its trafficking to the photoreceptor outer segments. Interaction with RD3 negatively regulates GUCY2E guanylate cyclase activity. There are 9 conserved cysteine residues in sensory guanylate cyclases, 6 in the extracellular domain, which may be involved in intra- or interchain disulfide bonds. As to expression, expressed in retina and enriched in photoreceptor outer segments.

The protein localises to the membrane. Its subcellular location is the photoreceptor outer segment membrane. It localises to the endoplasmic reticulum membrane. The catalysed reaction is GTP = 3',5'-cyclic GMP + diphosphate. Activated by GUCA1A when free calcium ions concentration is low, and inhibited by GUCA1A when free calcium ions concentration is high. Negatively regulated by RD3; inhibits the basal and GUCA1A-stimulated guanylate cyclase activity. In terms of biological role, catalyzes the synthesis of cyclic GMP (cGMP) in rods and cones of photoreceptors. Plays an essential role in phototransduction, by mediating cGMP replenishment. May also participate in the trafficking of membrane-asociated proteins to the photoreceptor outer segment membrane. The protein is Retinal guanylyl cyclase 1 (Gucy2e) of Rattus norvegicus (Rat).